Reading from the N-terminus, the 1031-residue chain is MITSITLLFSILWAQILSWISISGPLILFGLYYGFSITLPMGPSQILSIRAFLLEGNLSGLMALGGSTLGQLIILISIFYSPLYIMLLKPHAITLITLPYVLFYWYEIKDLSDYQPLRPITSLNDTGIIQIFLNSFLFQIFNPILLPSPVLTRLVKLFLFRYSHNSFFVISLFCGWLGGNILLINLSKFLLIRIKNNSSTLYLLVKRLIYRTFSIIIFVACLSYLGKFPVPFSMKKSSDESSLNEWKAERLSWLYKPWPTSLFNYRKWNRPLRYIENSRFSNKSPVKRNVSQYFFDVCLNDGRQRISFTSLPSFSIFEKNLKNYLNVSRISSSSDVFYQEWINTKKEQKDDLYSEVEERIKALDNGFSLEHAIEKRIGFSSINKEDIPNKTYDPFLDGEFRGKVAVSQSPLLLTGKSYGLTKTQKLLHLSRKNNKLKFWISNKWRKLERKDLPLPWEPLTQDARRVLILLIKGLRNKKSKIDSQRNDFSKEQGVIALNEENISPEFSAKTNNTNFLREKAIRKSHINWELVLNLSLRQRILYFNYLEKVKWETIKNSWKDLISGNFTEVKNIGSLVMKIMKIHQESPLQEFHKEVPRWTSKLKNDKFDVIAIGVTDIRQRKVRNLGYLIKGREKRRKIVRRFSQQSDFRRKLIKGSMRARRRKTLIWKILQFKTHSPFFLKITEKPALFRSTEIMEDIDVKGTFLNTIGIEKLISLLSERGVAIKGTKADRLAIANRWDFPLAQWGRSWLLIIQSYLRKYVVLPILIILKNISRLFLLQVPEWNEDWNEWSEEIHIKCTYDGTEVSERELPEQWLRDGLQIKIIYPFHLKPWHNSKFKEKGNRNMEPNFPHTQNKGKETSDNKAYRLQKNKKFKYSFLTAWGFQTNLPFGNIKKQPSFWKPVIKELKKRWKREILSKTANFYELYYNISLLYRKSDISNRFKIFAEFDIQTDERMNHEISKIQVNSESGGASVTDDGIKRESPLGITLNSENSNFSENEDFLWEIPVESRYKTAKNIKKLESLVVSKNNLT.

Transmembrane regions (helical) follow at residues 11–31, 68–88, 92–112, 127–147, 166–186, and 212–232; these read ILWAQILSWISISGPLILFGL, TLGQLIILISIFYSPLYIMLL, AITLITLPYVLFYWYEIKDLS, GIIQIFLNSFLFQIFNPILLP, SFFVISLFCGWLGGNILLINL, and TFSIIIFVACLSYLGKFPVPF.

It belongs to the TIC214 family. As to quaternary structure, part of the Tic complex.

It is found in the plastid. The protein localises to the chloroplast inner membrane. Its function is as follows. Involved in protein precursor import into chloroplasts. May be part of an intermediate translocation complex acting as a protein-conducting channel at the inner envelope. The sequence is that of Putative protein TIC 214 N-terminal part from Anthoceros angustus (Hornwort).